The chain runs to 427 residues: Isocitrate lyase (427 aa).

89–91 provides a ligand contact to substrate; that stretch reads SGW. Asp150 serves as a coordination point for Mg(2+). Catalysis depends on Cys188, which acts as the Proton acceptor. Residues 189–190, Arg225, 310–314, and Thr344 each bind substrate; these read GH and NCSPS.

The protein belongs to the isocitrate lyase/PEP mutase superfamily. Isocitrate lyase family. In terms of assembly, homotetramer. Mg(2+) serves as cofactor.

It catalyses the reaction D-threo-isocitrate = glyoxylate + succinate. Its pathway is carbohydrate metabolism; glyoxylate cycle; (S)-malate from isocitrate: step 1/2. Functionally, involved in the metabolic adaptation in response to environmental changes. Catalyzes the reversible formation of succinate and glyoxylate from isocitrate, a key step of the glyoxylate cycle, which operates as an anaplerotic route for replenishing the tricarboxylic acid cycle during growth on fatty acid substrates. This Halalkalibacterium halodurans (strain ATCC BAA-125 / DSM 18197 / FERM 7344 / JCM 9153 / C-125) (Bacillus halodurans) protein is Isocitrate lyase (aceA).